The chain runs to 560 residues: Flagellar M-ring protein (560 aa).

A helical membrane pass occupies residues Ile-26–Ala-46. The tract at residues Val-304–Ile-372 is disordered. The segment covering Pro-331 to Ala-353 has biased composition (low complexity). Residues Gly-354–Tyr-366 are compositionally biased toward polar residues. A helical transmembrane segment spans residues Phe-455–Leu-475.

It belongs to the FliF family. As to quaternary structure, the basal body constitutes a major portion of the flagellar organelle and consists of four rings (L,P,S, and M) mounted on a central rod. The M ring is integral to the inner membrane of the cell and may be connected to the flagellar rod via the S ring. The S (supramembrane ring) lies just distal to the M ring. The L and P rings lie in the outer membrane and the periplasmic space, respectively.

Its subcellular location is the cell inner membrane. It localises to the bacterial flagellum basal body. The M ring may be actively involved in energy transduction. The polypeptide is Flagellar M-ring protein (fliF) (Salmonella typhimurium (strain LT2 / SGSC1412 / ATCC 700720)).